Here is a 132-residue protein sequence, read N- to C-terminus: Small ribosomal subunit protein uS8 (132 aa).

It belongs to the universal ribosomal protein uS8 family. As to quaternary structure, part of the 30S ribosomal subunit. Contacts proteins S5 and S12.

Functionally, one of the primary rRNA binding proteins, it binds directly to 16S rRNA central domain where it helps coordinate assembly of the platform of the 30S subunit. The protein is Small ribosomal subunit protein uS8 of Bacillus velezensis (strain DSM 23117 / BGSC 10A6 / LMG 26770 / FZB42) (Bacillus amyloliquefaciens subsp. plantarum).